Reading from the N-terminus, the 72-residue chain is PI-stichotoxin-Hcr2j (72 aa).

The first 9 residues, 1–9, serve as a signal peptide directing secretion; it reads GFYFRSIQG. The propeptide occupies 10-17; that stretch reads FYFKRIQG. Residues 20-70 form the BPTI/Kunitz inhibitor domain; that stretch reads CSEPKKVGRCRESFPRFYFDSETGKCTPFIYGGCGGNGNNFETLHACRAIC. 3 cysteine pairs are disulfide-bonded: Cys-20–Cys-70, Cys-29–Cys-53, and Cys-45–Cys-66.

Belongs to the venom Kunitz-type family. Sea anemone type 2 potassium channel toxin subfamily.

It localises to the secreted. It is found in the nematocyst. Its function is as follows. Serine protease inhibitor that acts on trypsin (Ki=190 nM) and to elastase. Does not bind to alpha-chymotrypsin, cathepsin G, and kallikrein. It significantly increases neuroblastoma cell viability in an in vitro neurotoxicity model, being a consequence of an effective decrease of reactive oxygen species (ROS) level in the cells. It also protects cells by inhibiting ATP-induced purinoceptor activation. Its binding affinity to P2RX7 is moderate (Kd=45.5 uM). This is PI-stichotoxin-Hcr2j from Radianthus crispa (Leathery sea anemone).